A 400-amino-acid polypeptide reads, in one-letter code: Haptoglobin (400 aa).

The first 18 residues, 1-18 (MSALPVVVTLLLCGQLLA), serve as a signal peptide directing secretion. Sushi domains follow at residues 28–83 (DSCP…ECED) and 84–141 (ASCP…ECEA). Intrachain disulfides connect Cys-49–Cys-81, Cys-105–Cys-139, and Cys-143–Cys-260. One can recognise a Peptidase S1 domain in the interval 156–398 (IIGGSLDAKG…ILDWVRKTIA (243 aa)). N-linked (GlcNAc...) asparagine glycosylation is found at Asn-285, Asn-309, and Asn-315. Cystine bridges form between Cys-303–Cys-334 and Cys-345–Cys-375. An interaction with CD163 region spans residues 312–317 (VPENKT).

Belongs to the peptidase S1 family. As to quaternary structure, tetramer of two alpha and two beta chains; disulfide-linked. The hemoglobin/haptoglobin complex is composed of a haptoglobin dimer bound to two hemoglobin alpha-beta dimers. Interacts with CD163. Interacts with ERGIC3. In terms of tissue distribution, expressed by the liver and secreted in plasma.

The protein localises to the secreted. It is found in the extracellular space. Functionally, as a result of hemolysis, hemoglobin is found to accumulate in the kidney and is secreted in the urine. Haptoglobin captures, and combines with free plasma hemoglobin to allow hepatic recycling of heme iron and to prevent kidney damage. Haptoglobin also acts as an antioxidant, has antibacterial activity and plays a role in modulating many aspects of the acute phase response. Hemoglobin/haptoglobin complexes are rapidly cleared by the macrophage CD163 scavenger receptor expressed on the surface of liver Kupfer cells through an endocytic lysosomal degradation pathway. The sequence is that of Haptoglobin (HP) from Cervus elaphus (Red deer).